The primary structure comprises 409 residues: Peptidase T (409 aa).

Zn(2+) is bound at residue His78. Residue Asp80 is part of the active site. Residue Asp140 participates in Zn(2+) binding. The active-site Proton acceptor is Glu173. The Zn(2+) site is built by Glu174, Asp196, and His379.

Belongs to the peptidase M20B family. The cofactor is Zn(2+).

It localises to the cytoplasm. The enzyme catalyses Release of the N-terminal residue from a tripeptide.. Its function is as follows. Cleaves the N-terminal amino acid of tripeptides. The sequence is that of Peptidase T from Salmonella choleraesuis (strain SC-B67).